Consider the following 398-residue polypeptide: Phytoene synthase 2, chloroplastic (398 aa).

A chloroplast-targeting transit peptide spans methionine 1–arginine 80.

It belongs to the phytoene/squalene synthase family. In terms of tissue distribution, expressed in leaves and endosperm. Expressed in developing leaves.

Its subcellular location is the plastid. It localises to the chloroplast membrane. It is found in the chloroplast. The protein resides in the plastoglobule. It carries out the reaction 2 (2E,6E,10E)-geranylgeranyl diphosphate = 15-cis-phytoene + 2 diphosphate. Its function is as follows. Catalyzes the conversion of geranylgeranyl diphosphate to phytoene. Mediates the first committed step in carotenoid biosynthesis. The sequence is that of Phytoene synthase 2, chloroplastic from Oryza sativa subsp. japonica (Rice).